The chain runs to 294 residues: Cytidine deaminase (294 aa).

2 consecutive CMP/dCMP-type deaminase domains span residues 49-169 (TPQQ…FGPA) and 188-294 (ETQD…YIAL). 90–92 (NLE) contacts substrate. His-103 contacts Zn(2+). Residue Glu-105 is the Proton donor of the active site. Zn(2+) contacts are provided by Cys-130 and Cys-133.

Belongs to the cytidine and deoxycytidylate deaminase family. In terms of assembly, homodimer. It depends on Zn(2+) as a cofactor.

The catalysed reaction is cytidine + H2O + H(+) = uridine + NH4(+). It carries out the reaction 2'-deoxycytidine + H2O + H(+) = 2'-deoxyuridine + NH4(+). Functionally, this enzyme scavenges exogenous and endogenous cytidine and 2'-deoxycytidine for UMP synthesis. This Pasteurella multocida (strain Pm70) protein is Cytidine deaminase.